Reading from the N-terminus, the 345-residue chain is Leucine-rich repeat and transmembrane domain-containing protein 1 (345 aa).

The signal sequence occupies residues 1–27; that stretch reads MKGELLLFSSVIVLLQVVCSCPDKCYC. The LRRNT domain occupies 28-50; the sequence is QSSTNFVDCSQQGLAEIPSHLPP. The Extracellular portion of the chain corresponds to 28 to 288; sequence QSSTNFVDCS…PANLRHAIAT (261 aa). 5 LRR repeats span residues 51 to 72, 75 to 96, 99 to 120, 123 to 144, and 147 to 168; these read QTRT…AFRS, WLMT…AFHG, HLQV…LFHS, QLRE…LGET, and NLTI…LLES. N-linked (GlcNAc...) asparagine glycosylation occurs at Asn104. Residue Asn147 is glycosylated (N-linked (GlcNAc...) asparagine). The LRRCT domain maps to 180–234; the sequence is NLWKCNCHLLGLKLWLEKFVYKGGLTDGIICESPDTWKGKDLLRIPHELYQPCPL. A helical membrane pass occupies residues 289-309; sequence VIITGVVCGIVCLMMLAAAIY. The Cytoplasmic portion of the chain corresponds to 310-345; that stretch reads GCTYAAITAQYHGGPLAQTNDPGKVEEKERFDSSPA. The segment at 326 to 345 is disordered; the sequence is AQTNDPGKVEEKERFDSSPA. Residues 332–345 show a composition bias toward basic and acidic residues; the sequence is GKVEEKERFDSSPA.

Its subcellular location is the membrane. The chain is Leucine-rich repeat and transmembrane domain-containing protein 1 (LRTM1) from Homo sapiens (Human).